A 630-amino-acid chain; its full sequence is MKSVPLITGGLSFLLSACSGGGGSFDVDDVSNPSSSKPRYQDDTSSSRTKSNLEKLSIPSLGGGMKLVAQNLSGNKEPSFLNENGYISYFSSPSTIEDDVKNVKTENKIHTNPIGLEPNRALQDPNLQKYVYSGLYYIENWKDFSKLATEKKAYSGHYGYAFYYGNKTATDLPVSGVATYKGTWDFITATKYGQNYSLFSNARGQAYFRRSATRGDIDLENNSKNGDIGLISEFSADFGTKKLTGQLSYTKRKTDIQQYEKEKLYDIDAHIYSNRFRGKVTPTKSTSDEHPFTSEGTLEGGFYGPNAEELGGKFLARDKRVFGVFSAKETPETEKEKLSKETLIDGKLITFSTKTADATTSTTASTTADVKTDEKNFTTKDISSFGEADYLLIDNYPVPLFPEGDTDDFVTSKHHDIGNKTYKVEACCKNLSYVKFGMYYEDKEKKNTNQTGQYHQFLLGLRTPSSQIPVTGNVKYLGSWFGYIGDDKTSYSTTGNKQQDKNAPAEFDVNFDNKTLTGKLKRADSQNTVFNIEATFKNGSNAFEGKATANVVIDPKNTQATSKVNFTTTVNGAFYGPHATELGGYFTYNGNNPTATNSESSSTVPSPPNSPNARAAVVFGAKRQVEKTNK.

A signal peptide spans 1-17 (MKSVPLITGGLSFLLSA). Cys18 carries the N-palmitoyl cysteine lipid modification. The S-diacylglycerol cysteine moiety is linked to residue Cys18. Disordered stretches follow at residues 26–53 (DVDD…KSNL), 280–301 (VTPT…LEGG), and 591–613 (NNPT…SPNA). Positions 32 to 50 (NPSSSKPRYQDDTSSSRTK) are enriched in polar residues.

It belongs to the TbpB family.

It localises to the cell outer membrane. The protein resides in the cell surface. Its function is as follows. Haemophilus acquires iron by extracting it from serum transferrin (TF) in its human host. Acts as a transferrin receptor and is required for transferrin utilization. This chain is Transferrin-binding protein B, found in Haemophilus influenzae (strain 86-028NP).